We begin with the raw amino-acid sequence, 502 residues long: ATP synthase subunit alpha (502 aa).

169 to 176 (GDRQTGKT) serves as a coordination point for ATP.

Belongs to the ATPase alpha/beta chains family. F-type ATPases have 2 components, CF(1) - the catalytic core - and CF(0) - the membrane proton channel. CF(1) has five subunits: alpha(3), beta(3), gamma(1), delta(1), epsilon(1). CF(0) has three main subunits: a(1), b(2) and c(9-12). The alpha and beta chains form an alternating ring which encloses part of the gamma chain. CF(1) is attached to CF(0) by a central stalk formed by the gamma and epsilon chains, while a peripheral stalk is formed by the delta and b chains.

It localises to the cell inner membrane. The catalysed reaction is ATP + H2O + 4 H(+)(in) = ADP + phosphate + 5 H(+)(out). Its function is as follows. Produces ATP from ADP in the presence of a proton gradient across the membrane. The alpha chain is a regulatory subunit. In Nitratidesulfovibrio vulgaris (strain DSM 19637 / Miyazaki F) (Desulfovibrio vulgaris), this protein is ATP synthase subunit alpha.